The sequence spans 2273 residues: Retinal-specific phospholipid-transporting ATPase ABCA4 (2273 aa).

The Cytoplasmic portion of the chain corresponds to 1-21 (MGFVRQIQLLLWKNWTLRKRQ). A helical membrane pass occupies residues 22–42 (KIRFVVELVWPLSLFLVLIWL). The Extracellular portion of the chain corresponds to 43-646 (RNANPLYSHH…MPYPCFVDDS (604 aa)). 2 cysteine pairs are disulfide-bonded: Cys-54-Cys-81 and Cys-75-Cys-324. N-linked (GlcNAc...) asparagine glycosylation is present at Asn-98. Mg(2+) is bound by residues Ser-336 and Asn-338. An intrachain disulfide couples Cys-370 to Cys-519. N-linked (GlcNAc...) asparagine glycosylation is found at Asn-415, Asn-444, and Asn-504. 2 residues coordinate an N-all-trans-retinylidenephosphatidylethanolamine: Arg-587 and Arg-653. Intrachain disulfides connect Cys-641/Cys-1490, Cys-1444/Cys-1455, and Cys-1488/Cys-1502. A helical transmembrane segment spans residues 647 to 667 (FMIILNRCFPIFMVLAWIYSV). Residues 668–699 (SMTVKSIVLEKELRLKETLKNQGVSNAVIWCT) lie on the Cytoplasmic side of the membrane. Residues 700 to 720 (WFLDSFSIMSMSIFLLTIFIM) form a helical membrane-spanning segment. The Extracellular portion of the chain corresponds to 721-730 (HGRILHYSDP). A helical transmembrane segment spans residues 731–751 (FILFLFLLAFSTATIMLCFLL). The Cytoplasmic segment spans residues 752–759 (STFFSKAS). The chain crosses the membrane as a helical span at residues 760-780 (LAAACSGVIYFTLYLPHILCF). At 781 to 835 (AWQDRMTAELKKAVSLLSPVAFGFGTEYLVRFEEQGLGLQWSNIGNSPTEGDEFS) the chain is on the extracellular side. The chain crosses the membrane as a helical span at residues 836-856 (FLLSMQMMLLDAAVYGLLAWY). Topologically, residues 857–1376 (LDQVFPGDYG…IRSHKDFLAQ (520 aa)) are cytoplasmic. The tract at residues 891–911 (ERALEKTEPLTEETEDPEHPE) is disordered. The residue at position 901 (Thr-901) is a Phosphothreonine. In terms of domain architecture, ABC transporter 1 spans 929-1160 (VCVKNLVKIF…FGTGLYLTLV (232 aa)). ATP-binding residues include Phe-938, Gly-966, and Lys-969. Thr-970 contributes to the Mg(2+) binding site. 6 residues coordinate ATP: Thr-971, Gln-1010, Lys-1054, Gly-1064, Gly-1065, and His-1118. Ser-1185 carries the post-translational modification Phosphoserine. A disordered region spans residues 1284 to 1345 (PLFAGGAQQK…EPECPGPQLN (62 aa)). Residue Thr-1313 is modified to Phosphothreonine. Ser-1317 carries the phosphoserine modification. Residues 1331-1340 (GQPPPEPECP) show a composition bias toward pro residues. Residues 1377–1397 (IVLPATFVFLALMLSIVIPPF) form a helical membrane-spanning segment. Over 1398–1727 (GEYPALTLHP…VSPTTYWVTN (330 aa)) the chain is Extracellular. Residue Asn-1469 is glycosylated (N-linked (GlcNAc...) asparagine). 3 N-linked (GlcNAc...) asparagine glycosylation sites follow: Asn-1529, Asn-1588, and Asn-1662. Residues 1728-1748 (FLWDIMNYSVSAGLVVGIFIG) traverse the membrane as a helical segment. Residues 1749–1759 (FQKKAYTSPEN) are Cytoplasmic-facing. Residues 1760-1780 (LPALVALLLLYGWAVIPMMYP) form a helical membrane-spanning segment. Residues 1781-1792 (ASFLFDVPSTAY) lie on the Extracellular side of the membrane. Residues 1793–1813 (VALSCANLFIGINSSAITFIL) form a helical membrane-spanning segment. Residues 1814-1831 (ELFENNRTLLRFNAVLRK) lie on the Cytoplasmic side of the membrane. The helical transmembrane segment at 1832 to 1852 (LLIVFPHFCLGRGLIDLALSQ) threads the bilayer. The Extracellular segment spans residues 1853-1873 (AVTDVYARFGEEHSANPFHWD). A helical transmembrane segment spans residues 1874-1894 (LIGKNLFAMVVEGVVYFLLTL). Over 1895 to 2273 (LVQRHFFLSQ…AAGASRQAQD (379 aa)) the chain is Cytoplasmic. In terms of domain architecture, ABC transporter 2 spans 1938-2170 (LRLHELTKIY…FGDGYIVTMK (233 aa)). Asn-1974, Gly-1975, Lys-1978, Thr-1979, Thr-1980, and Gly-2073 together coordinate ATP. A Mg(2+)-binding site is contributed by Thr-1979. The essential for ATP binding and ATPase activity stretch occupies residues 2244 to 2249 (VFVNFA).

The protein belongs to the ABC transporter superfamily. ABCA family. Post-translationally, proteolytic cleavage by trypsin leads to a 120-kDa N-terminal fragment and a 115-kDa C-terminal fragment that are linked through disulfide bonds. In terms of processing, N-glycosylated. Phosphorylation is independent of light exposure and modulates ATPase activity. As to expression, retinal-specific. Seems to be exclusively found in the rims of rod photoreceptor cells.

It localises to the membrane. The protein localises to the endoplasmic reticulum. The protein resides in the cytoplasmic vesicle. Its subcellular location is the cell projection. It is found in the cilium. It localises to the photoreceptor outer segment. The catalysed reaction is an N-all-trans-retinylidenephosphatidylethanolamine(out) + ATP + H2O = an N-all-trans-retinylidenephosphatidylethanolamine(in) + ADP + phosphate + H(+). The enzyme catalyses ATP + H2O + phospholipidSide 1 = ADP + phosphate + phospholipidSide 2.. It catalyses the reaction a 1,2-diacyl-sn-glycero-3-phosphoethanolamine(out) + ATP + H2O = a 1,2-diacyl-sn-glycero-3-phosphoethanolamine(in) + ADP + phosphate + H(+). It carries out the reaction N-11-cis-retinylidenephosphatidylethanolamine(out) + ATP + H2O = N-11-cis-retinylidenephosphatidylethanolamine(in) + ADP + phosphate + H(+). The catalysed reaction is ATP + H2O = ADP + phosphate + H(+). With respect to regulation, ATPase activity is decreased by cholesterol and ceramide. Phospholipids translocase activity is highly reduced by berylium fluoride and aluminum floride. N-ethylmaleimide inhibits phospholipid translocase activity. In terms of biological role, flippase that catalyzes in an ATP-dependent manner the transport of retinal-phosphatidylethanolamine conjugates like 11-cis and all-trans isomers of N-retinylidene-phosphatidylethanolamine (N-Ret-PE) from the lumen to the cytoplasmic leaflet of photoreceptor outer segment disk membranes, where 11-cis-retinylidene-phosphatidylethanolamine is then isomerized to its all-trans isomer and reduced by RDH8 to produce all-trans-retinol. This transport activity ensures that all-trans-retinal generated from photoexcitation and 11-cis-retinal not needed for the regeneration of rhodopsin and cone opsins are effectively cleared from the photoreceptors, therefore preventing their accumulation and the formation of toxic bisretinoid. Displays ATPase activity in vitro in absence of retinal substrate. May display GTPase activity that is strongly influenced by the lipid environment and the presence of retinoid compounds. Binds the unprotonated form of N-retinylidene-phosphatidylethanolamine with high affinity in the absence of ATP, and ATP binding and hydrolysis induce a protein conformational change that causes N-retinylidene-phosphatidylethanolamine release. This is Retinal-specific phospholipid-transporting ATPase ABCA4 from Homo sapiens (Human).